The primary structure comprises 418 residues: Nucleoside permease NupC (418 aa).

9 consecutive transmembrane segments (helical) span residues 2–22, 34–54, 93–113, 174–194, 198–218, 264–284, 292–314, 354–374, and 395–415; these read IFSS…AWVF, IVSA…VPLG, IGGF…ASLI, IFAV…AGYA, IPLP…LLFA, LLAF…VGGF, LGLI…WSQA, AIIT…MLIG, and VLVG…FIGL.

This sequence belongs to the concentrative nucleoside transporter (CNT) (TC 2.A.41) family.

It is found in the cell inner membrane. In terms of biological role, involved in purine nucleosides uptake. Could also be involved in uptake of nucleobases. The protein is Nucleoside permease NupC of Helicobacter pylori (strain ATCC 700392 / 26695) (Campylobacter pylori).